Consider the following 343-residue polypeptide: Dihydroorotase (343 aa).

The Zn(2+) site is built by histidine 13 and histidine 15. Substrate-binding positions include 15-17 (HLR) and asparagine 41. Lysine 99, histidine 136, and histidine 174 together coordinate Zn(2+). Lysine 99 carries the N6-carboxylysine modification. Histidine 136 is a substrate binding site. Leucine 219 is a binding site for substrate. Aspartate 247 contacts Zn(2+). Aspartate 247 is an active-site residue. Substrate is bound by residues histidine 251 and alanine 263.

Belongs to the metallo-dependent hydrolases superfamily. DHOase family. Class II DHOase subfamily. Homodimer. Zn(2+) is required as a cofactor.

It carries out the reaction (S)-dihydroorotate + H2O = N-carbamoyl-L-aspartate + H(+). Its pathway is pyrimidine metabolism; UMP biosynthesis via de novo pathway; (S)-dihydroorotate from bicarbonate: step 3/3. Functionally, catalyzes the reversible cyclization of carbamoyl aspartate to dihydroorotate. The sequence is that of Dihydroorotase from Shewanella putrefaciens (strain CN-32 / ATCC BAA-453).